We begin with the raw amino-acid sequence, 169 residues long: UPF0725 protein At2g19200 (169 aa).

Belongs to the UPF0725 (EMB2204) family.

The protein is UPF0725 protein At2g19200 of Arabidopsis thaliana (Mouse-ear cress).